Here is a 329-residue protein sequence, read N- to C-terminus: Glycerol-3-phosphate dehydrogenase [NAD(P)+] (329 aa).

NADPH contacts are provided by Trp-11, Arg-30, and Lys-103. Sn-glycerol 3-phosphate is bound by residues Lys-103, Gly-132, and Ser-134. Ala-136 contributes to the NADPH binding site. Sn-glycerol 3-phosphate contacts are provided by Lys-187, Asp-240, Ser-250, Arg-251, and Asn-252. Lys-187 functions as the Proton acceptor in the catalytic mechanism. Arg-251 is an NADPH binding site. Val-275 and Glu-277 together coordinate NADPH.

This sequence belongs to the NAD-dependent glycerol-3-phosphate dehydrogenase family.

It localises to the cytoplasm. It carries out the reaction sn-glycerol 3-phosphate + NAD(+) = dihydroxyacetone phosphate + NADH + H(+). It catalyses the reaction sn-glycerol 3-phosphate + NADP(+) = dihydroxyacetone phosphate + NADPH + H(+). It participates in membrane lipid metabolism; glycerophospholipid metabolism. In terms of biological role, catalyzes the reduction of the glycolytic intermediate dihydroxyacetone phosphate (DHAP) to sn-glycerol 3-phosphate (G3P), the key precursor for phospholipid synthesis. The polypeptide is Glycerol-3-phosphate dehydrogenase [NAD(P)+] (Dechloromonas aromatica (strain RCB)).